Consider the following 415-residue polypeptide: Tyrosine-protein phosphatase non-receptor type 2 (415 aa).

Residues 5-275 (IEREFEELDT…RFSYMAIIEG (271 aa)) form the Tyrosine-protein phosphatase domain. At Tyr22 the chain carries Phosphotyrosine. The residue at position 52 (Ser52) is a Phosphoserine. Tyr68 is modified (phosphotyrosine). Substrate is bound by residues Asp182, 216–222 (CSAGIGR), and Gln260. Cys216 functions as the Phosphocysteine intermediate in the catalytic mechanism. Cys216 is subject to S-nitrosocysteine. A phosphoserine mark is found at Ser293, Ser298, and Ser304. An endoplasmic reticulum location region spans residues 346-415 (ESALRKRIRE…WTLFFQQNAL (70 aa)). Residues 376–415 (ERKRKRWLYWQPILTKMGFMSVILVGAFVGWTLFFQQNAL) form a mediates interaction with STX17 region.

This sequence belongs to the protein-tyrosine phosphatase family. Non-receptor class 1 subfamily. As to quaternary structure, interacts with RMDN3. Isoform 1 interacts with TMED9. Isoform 1 interacts with STX17; dephosphorylates STX17. Interacts with ITGA1 (via cytoplasmic domain); activates the phosphatase activity towards EGFR. Interacts with TRAF2; probably involved in tumor necrosis factor-mediated signaling. Interacts with MET. Interacts with FAM220A and STAT3; interaction with FAM220A promotes interaction of PTPN2 with transcriptional activator STAT3, leading to dephosphorylation of STAT3 by PTPN2 and negative regulation of STAT3 transcriptional activator activity. In terms of processing, specifically phosphorylated in a cell cycle-dependent manner by cyclin-dependent kinases CDK1 and CDK2. Probably activated through phosphorylation by PKR. In terms of tissue distribution, ubiquitously expressed. Isoform 2 is probably the major isoform. Isoform 1 is expressed in T-cells and in placenta.

The protein localises to the endoplasmic reticulum. It is found in the endoplasmic reticulum-Golgi intermediate compartment. The protein resides in the nucleus. It localises to the cytoplasm. Its subcellular location is the cell membrane. It carries out the reaction O-phospho-L-tyrosyl-[protein] + H2O = L-tyrosyl-[protein] + phosphate. In terms of biological role, non-receptor type tyrosine-specific phosphatase that dephosphorylates receptor protein tyrosine kinases including INSR, EGFR, CSF1R, PDGFR. Also dephosphorylates non-receptor protein tyrosine kinases like JAK1, JAK2, JAK3, Src family kinases, STAT1, STAT3 and STAT6 either in the nucleus or the cytoplasm. Negatively regulates numerous signaling pathways and biological processes like hematopoiesis, inflammatory response, cell proliferation and differentiation, and glucose homeostasis. Plays a multifaceted and important role in the development of the immune system. Functions in T-cell receptor signaling through dephosphorylation of FYN and LCK to control T-cells differentiation and activation. Dephosphorylates CSF1R, negatively regulating its downstream signaling and macrophage differentiation. Negatively regulates cytokine (IL2/interleukin-2 and interferon)-mediated signaling through dephosphorylation of the cytoplasmic kinases JAK1, JAK3 and their substrate STAT1, that propagate signaling downstream of the cytokine receptors. Also regulates the IL6/interleukin-6 and IL4/interleukin-4 cytokine signaling through dephosphorylation of STAT3 and STAT6 respectively. In addition to the immune system, it is involved in anchorage-dependent, negative regulation of EGF-stimulated cell growth. Activated by the integrin ITGA1/ITGB1, it dephosphorylates EGFR and negatively regulates EGF signaling. Dephosphorylates PDGFRB and negatively regulates platelet-derived growth factor receptor-beta signaling pathway and therefore cell proliferation. Negatively regulates tumor necrosis factor-mediated signaling downstream via MAPK through SRC dephosphorylation. May also regulate the hepatocyte growth factor receptor signaling pathway through dephosphorylation of the hepatocyte growth factor receptor MET. Also plays an important role in glucose homeostasis. For instance, negatively regulates the insulin receptor signaling pathway through the dephosphorylation of INSR and control gluconeogenesis and liver glucose production through negative regulation of the IL6 signaling pathways. May also bind DNA. The protein is Tyrosine-protein phosphatase non-receptor type 2 (PTPN2) of Homo sapiens (Human).